The following is a 155-amino-acid chain: Transcriptional repressor NrdR (155 aa).

A zinc finger lies at 3 to 34 (CPFCQHDDTQVLDTRVSEEGDSIRRRRRCTSC). In terms of domain architecture, ATP-cone spans 49 to 139 (PVVVKKNGSR…VYKSFEDVAE (91 aa)).

This sequence belongs to the NrdR family. The cofactor is Zn(2+).

Negatively regulates transcription of bacterial ribonucleotide reductase nrd genes and operons by binding to NrdR-boxes. The polypeptide is Transcriptional repressor NrdR (Janthinobacterium sp. (strain Marseille) (Minibacterium massiliensis)).